A 285-amino-acid polypeptide reads, in one-letter code: Nucleotide-binding protein Gmet_1286 (285 aa).

8–15 lines the ATP pocket; sequence GLSGSGKS. GTP is bound at residue 59-62; that stretch reads DIRG.

This sequence belongs to the RapZ-like family.

Displays ATPase and GTPase activities. This Geobacter metallireducens (strain ATCC 53774 / DSM 7210 / GS-15) protein is Nucleotide-binding protein Gmet_1286.